A 96-amino-acid chain; its full sequence is Co-chaperonin GroES (96 aa).

This sequence belongs to the GroES chaperonin family. Heptamer of 7 subunits arranged in a ring. Interacts with the chaperonin GroEL.

The protein localises to the cytoplasm. Functionally, together with the chaperonin GroEL, plays an essential role in assisting protein folding. The GroEL-GroES system forms a nano-cage that allows encapsulation of the non-native substrate proteins and provides a physical environment optimized to promote and accelerate protein folding. GroES binds to the apical surface of the GroEL ring, thereby capping the opening of the GroEL channel. The chain is Co-chaperonin GroES from Verminephrobacter eiseniae (strain EF01-2).